The following is a 334-amino-acid chain: MATIKDVARLAGVSTTTVSHVINKTRFVAEATQEKVNKAVDELNYAPSAVARSLKCNTTRTIGMLVTQSTNLFFSEVIDGVESYCYRQGYTLILCNTGGIYEKQRDYIRMLAEKRVDGILVMCSDLTEELREMLDRHADIPKVIMDWGPESSQADKIIDNSEEGGYLATKYLIERGHSKIACLSGHLDKAACVERISGYKRALNEAKITADENMIIEGNFECDTAVIAADQIIEMEERPTAVFCFNDTMALGLMSRLQEKGIRIPEDISVIGYDNIELAEYFSPPLTTVHQPKRRVGKNAFEILLERIKDKDHEKRVFEMHPEIVERSTVKTLN.

In terms of domain architecture, HTH lacI-type spans 2 to 56; the sequence is ATIKDVARLAGVSTTTVSHVINKTRFVAEATQEKVNKAVDELNYAPSAVARSLKC. Positions 4 to 23 form a DNA-binding region, H-T-H motif; it reads IKDVARLAGVSTTTVSHVIN. The DNA-binding element occupies 48-56; that stretch reads SAVARSLKC. Positions 73, 189, 220, and 274 each coordinate hypoxanthine.

As to quaternary structure, homodimer.

It functions in the pathway purine metabolism; purine nucleotide biosynthesis [regulation]. Functionally, is the main repressor of the genes involved in the de novo synthesis of purine nucleotides, regulating purB, purC, purEK, purF, purHD, purL, purMN and guaBA expression. PurR is allosterically activated to bind its cognate DNA by binding the purine corepressors, hypoxanthine or guanine, thereby effecting transcription repression. This chain is HTH-type transcriptional repressor PurR, found in Vibrio atlanticus (strain LGP32) (Vibrio splendidus (strain Mel32)).